We begin with the raw amino-acid sequence, 273 residues long: NH(3)-dependent NAD(+) synthetase (273 aa).

46 to 53 contacts ATP; sequence GISGGQDS. Residue Asp-52 coordinates Mg(2+). Arg-139 serves as a coordination point for deamido-NAD(+). Thr-159 contributes to the ATP binding site. Glu-164 is a Mg(2+) binding site. Lys-172 and Asp-179 together coordinate deamido-NAD(+). ATP contacts are provided by Lys-188 and Thr-210. Residue 259 to 260 participates in deamido-NAD(+) binding; that stretch reads HK.

This sequence belongs to the NAD synthetase family. In terms of assembly, homodimer.

It carries out the reaction deamido-NAD(+) + NH4(+) + ATP = AMP + diphosphate + NAD(+) + H(+). Its pathway is cofactor biosynthesis; NAD(+) biosynthesis; NAD(+) from deamido-NAD(+) (ammonia route): step 1/1. Functionally, catalyzes the ATP-dependent amidation of deamido-NAD to form NAD. Uses ammonia as a nitrogen source. The chain is NH(3)-dependent NAD(+) synthetase from Mycobacteroides abscessus (strain ATCC 19977 / DSM 44196 / CCUG 20993 / CIP 104536 / JCM 13569 / NCTC 13031 / TMC 1543 / L948) (Mycobacterium abscessus).